Here is a 134-residue protein sequence, read N- to C-terminus: Cytochrome b5 (134 aa).

A2 is subject to N-acetylalanine. N6-acetyllysine occurs at positions 7, 10, and 19. In terms of domain architecture, Cytochrome b5 heme-binding spans 9–85; the sequence is VKYYTLEEIQ…SKTFIIGELH (77 aa). Residues H44 and H68 each contribute to the heme site. Residues 109–131 form a helical membrane-spanning segment; sequence WWTNWVIPAISALVVSLMYHFYT.

Belongs to the cytochrome b5 family.

The protein resides in the endoplasmic reticulum membrane. The protein localises to the microsome membrane. It localises to the cytoplasm. Functionally, cytochrome b5 is a membrane-bound hemoprotein functioning as an electron carrier for several membrane-bound oxygenases. This is Cytochrome b5 (CYB5A) from Sus scrofa (Pig).